A 191-amino-acid chain; its full sequence is Protein Ves (191 aa).

The protein belongs to the Ves family.

This is Protein Ves from Escherichia coli (strain ATCC 8739 / DSM 1576 / NBRC 3972 / NCIMB 8545 / WDCM 00012 / Crooks).